A 424-amino-acid polypeptide reads, in one-letter code: Glutamyl-tRNA(Gln) amidotransferase subunit D (424 aa).

The segment at 56 to 78 is disordered; it reads GETANGSRNGGKGCKTNEEELPE. The Asparaginase/glutaminase domain occupies 84-413; sequence PKIAILSTGG…EKAAGMLRED (330 aa). Catalysis depends on residues Thr94, Thr170, Asp171, and Lys247.

It belongs to the asparaginase 1 family. GatD subfamily. In terms of assembly, heterodimer of GatD and GatE.

The catalysed reaction is L-glutamyl-tRNA(Gln) + L-glutamine + ATP + H2O = L-glutaminyl-tRNA(Gln) + L-glutamate + ADP + phosphate + H(+). In terms of biological role, allows the formation of correctly charged Gln-tRNA(Gln) through the transamidation of misacylated Glu-tRNA(Gln) in organisms which lack glutaminyl-tRNA synthetase. The reaction takes place in the presence of glutamine and ATP through an activated gamma-phospho-Glu-tRNA(Gln). The GatDE system is specific for glutamate and does not act on aspartate. The protein is Glutamyl-tRNA(Gln) amidotransferase subunit D of Methanosarcina acetivorans (strain ATCC 35395 / DSM 2834 / JCM 12185 / C2A).